We begin with the raw amino-acid sequence, 698 residues long: Ubiquitin-like modifier-activating enzyme ATG7 (698 aa).

Positions 11–13 (FAP) match the FAP motif motif. K41 is covalently cross-linked (Glycyl lysine isopeptide (Lys-Gly) (interchain with G-Cter in ubiquitin)). Residue C567 is the Glycyl thioester intermediate of the active site. Position 693 is a phosphoserine (S693).

The protein belongs to the ATG7 family. As to quaternary structure, homodimer. Interacts with ATG3; this interaction is essential for the transfer of ATG8-like proteins's thioester from ATG7 to ATG3 and plays a role in the conjugation of ATG12 to ATG5. Interacts with ATG12. Forms intermediate conjugates with GABARAPL1. Forms intermediate conjugates with ATG8-like proteins such as GABARAP, GABARAPL2 or MAP1LC3A. Interacts with EP300 acetyltransferase. Interacts with FOXO1. In terms of processing, acetylated by EP300. Post-translationally, polyubiquitinated on Lys-41 via 'Lys-63'-linked ubiquitin by TRIM32; this modification positiely regulates ATG8 and ATG12 activating enzyme activity leading to initiation of autophagy under metabolic stress. In terms of tissue distribution, widely expressed.

The protein localises to the cytoplasm. The protein resides in the preautophagosomal structure. Functionally, E1-like activating enzyme involved in the 2 ubiquitin-like systems required for cytoplasm to vacuole transport (Cvt) and autophagy. Activates ATG12 for its conjugation with ATG5 as well as the ATG8 family proteins for their conjugation with phosphatidylethanolamine. Both systems are needed for the ATG8 association to Cvt vesicles and autophagosomes membranes. Required for autophagic death induced by caspase-8 inhibition. Facilitates LC3-I lipidation with phosphatidylethanolamine to form LC3-II which is found on autophagosomal membranes. Required for mitophagy which contributes to regulate mitochondrial quantity and quality by eliminating the mitochondria to a basal level to fulfill cellular energy requirements and preventing excess ROS production. Modulates p53/TP53 activity to regulate cell cycle and survival during metabolic stress. Also plays a key role in the maintenance of axonal homeostasis, the prevention of axonal degeneration, the maintenance of hematopoietic stem cells, the formation of Paneth cell granules, as well as in adipose differentiation. Plays a role in regulating the liver clock and glucose metabolism by mediating the autophagic degradation of CRY1 (clock repressor) in a time-dependent manner. This is Ubiquitin-like modifier-activating enzyme ATG7 from Rattus norvegicus (Rat).